The sequence spans 122 residues: Small ribosomal subunit protein uS13 (122 aa).

The disordered stretch occupies residues 97–122 (PVRGQRTHTNAKTRKGRSKLPIAGKK).

It belongs to the universal ribosomal protein uS13 family. As to quaternary structure, part of the 30S ribosomal subunit. Forms a loose heterodimer with protein S19. Forms two bridges to the 50S subunit in the 70S ribosome.

Functionally, located at the top of the head of the 30S subunit, it contacts several helices of the 16S rRNA. In the 70S ribosome it contacts the 23S rRNA (bridge B1a) and protein L5 of the 50S subunit (bridge B1b), connecting the 2 subunits; these bridges are implicated in subunit movement. Contacts the tRNAs in the A and P-sites. In Wolbachia pipientis subsp. Culex pipiens (strain wPip), this protein is Small ribosomal subunit protein uS13.